The chain runs to 136 residues: Sec-independent protein translocase protein TatB (136 aa).

Residues 1-21 traverse the membrane as a helical segment; that stretch reads MFDIGFWELVLISVIGLVVLG. Residues 66 to 136 are disordered; that stretch reads ASKQGLSDLD…TTPPRQDKNE (71 aa). Composition is skewed to basic and acidic residues over residues 77 to 89 and 96 to 107; these read ELQKSIDEMKETA and YKKDIDDIKTSL. The span at 108–130 shows a compositional bias: polar residues; sequence DKNPSGTTQQENSILDSSKTTPP.

This sequence belongs to the TatB family. In terms of assembly, the Tat system comprises two distinct complexes: a TatABC complex, containing multiple copies of TatA, TatB and TatC subunits, and a separate TatA complex, containing only TatA subunits. Substrates initially bind to the TatABC complex, which probably triggers association of the separate TatA complex to form the active translocon.

It is found in the cell inner membrane. In terms of biological role, part of the twin-arginine translocation (Tat) system that transports large folded proteins containing a characteristic twin-arginine motif in their signal peptide across membranes. Together with TatC, TatB is part of a receptor directly interacting with Tat signal peptides. TatB may form an oligomeric binding site that transiently accommodates folded Tat precursor proteins before their translocation. This Psychromonas ingrahamii (strain DSM 17664 / CCUG 51855 / 37) protein is Sec-independent protein translocase protein TatB.